Reading from the N-terminus, the 351-residue chain is DNA polymerase IV (351 aa).

Residues Ile-3–Gly-187 form the UmuC domain. Mg(2+)-binding residues include Asp-7 and Asp-105. Glu-106 is a catalytic residue.

The protein belongs to the DNA polymerase type-Y family. Mg(2+) serves as cofactor.

The catalysed reaction is DNA(n) + a 2'-deoxyribonucleoside 5'-triphosphate = DNA(n+1) + diphosphate. In terms of biological role, poorly processive, error-prone DNA polymerase involved in untargeted mutagenesis. Copies undamaged DNA at stalled replication forks, which arise in vivo from mismatched or misaligned primer ends. These misaligned primers can be extended by PolIV. Exhibits no 3'-5' exonuclease (proofreading) activity. May be involved in translesional synthesis. The protein is DNA polymerase IV of Sulfurisphaera tokodaii (strain DSM 16993 / JCM 10545 / NBRC 100140 / 7) (Sulfolobus tokodaii).